Consider the following 166-residue polypeptide: MAKTLSKSSGGALAPWLGISLIVILFDQLTKIAVLKTFAYGAMHALTPFFNLTLIYNRGAAFGFLATAGGWQRWAFTALGIGATLVICYLLKRHGHQRLFSLSLALILGGALGNVIDRLIYGHVIDFLDFHVGAWHWPAFNLADSAITVGAVLLIYDELRRVRGAR.

The next 4 helical transmembrane spans lie at 10–30 (GGALAPWLGISLIVILFDQLT), 32–52 (IAVLKTFAYGAMHALTPFFNL), 71–91 (WQRWAFTALGIGATLVICYLL), and 100–120 (FSLSLALILGGALGNVIDRLI). Residues Asp126 and Asp144 contribute to the active site. The helical transmembrane segment at 135–155 (WHWPAFNLADSAITVGAVLLI) threads the bilayer.

This sequence belongs to the peptidase A8 family.

It is found in the cell inner membrane. The catalysed reaction is Release of signal peptides from bacterial membrane prolipoproteins. Hydrolyzes -Xaa-Yaa-Zaa-|-(S,diacylglyceryl)Cys-, in which Xaa is hydrophobic (preferably Leu), and Yaa (Ala or Ser) and Zaa (Gly or Ala) have small, neutral side chains.. Its pathway is protein modification; lipoprotein biosynthesis (signal peptide cleavage). In terms of biological role, this protein specifically catalyzes the removal of signal peptides from prolipoproteins. The polypeptide is Lipoprotein signal peptidase (Burkholderia mallei (strain ATCC 23344)).